The following is a 66-amino-acid chain: Large ribosomal subunit protein bL35 (66 aa).

Residues 19-45 (SGKVVAAQSTKRHGMTKRSKRSLRTRR) form a disordered region. The segment covering 28 to 45 (TKRHGMTKRSKRSLRTRR) has biased composition (basic residues).

It belongs to the bacterial ribosomal protein bL35 family.

In Anaplasma phagocytophilum (strain HZ), this protein is Large ribosomal subunit protein bL35.